The chain runs to 306 residues: Ribonuclease Z (306 aa).

Zn(2+) contacts are provided by His63, His65, Asp67, His68, His141, Asp211, and His269. Asp67 acts as the Proton acceptor in catalysis.

This sequence belongs to the RNase Z family. In terms of assembly, homodimer. Zn(2+) is required as a cofactor.

It carries out the reaction Endonucleolytic cleavage of RNA, removing extra 3' nucleotides from tRNA precursor, generating 3' termini of tRNAs. A 3'-hydroxy group is left at the tRNA terminus and a 5'-phosphoryl group is left at the trailer molecule.. In terms of biological role, zinc phosphodiesterase, which displays some tRNA 3'-processing endonuclease activity. Probably involved in tRNA maturation, by removing a 3'-trailer from precursor tRNA. This is Ribonuclease Z from Staphylococcus epidermidis (strain ATCC 35984 / DSM 28319 / BCRC 17069 / CCUG 31568 / BM 3577 / RP62A).